A 684-amino-acid polypeptide reads, in one-letter code: G-protein-signaling modulator 2 (684 aa).

The important for interaction with NUMA1; INSC and FRMPD1 stretch occupies residues 22-357; sequence ASCLELALEG…HLEISREVGD (336 aa). TPR repeat units follow at residues 24 to 57, 62 to 95, 102 to 135, 142 to 184, 202 to 235, 242 to 275, 282 to 315, and 322 to 355; these read CLEL…GTED, SAIY…ARTI, AKAS…SREL, ARAL…AVDF, GRAF…AKEF, RRAY…ARQL, AQSC…AQEL, and GRAC…SREV. Serine 132 bears the Phosphoserine; by PKG mark. A Phosphoserine; by PKG modification is found at serine 352. 2 positions are modified to phosphoserine: serine 408 and serine 483. Threonine 486 bears the Phosphothreonine mark. Positions 489–511 constitute a GoLoco 1 domain; the sequence is DEGFFDLLSRFQSNRMDDQRCCL. Residue serine 501 is modified to Phosphoserine; by PKC. Phosphoserine occurs at positions 541 and 565. 3 GoLoco domains span residues 544-566, 594-616, and 628-650; these read TDEF…RASF, DEDF…RCAP, and DEDF…RVLL. Serine 607 bears the Phosphoserine; by PKG mark. Residues arginine 608, arginine 613, arginine 642, and arginine 647 each coordinate GDP.

This sequence belongs to the GPSM family. In terms of assembly, interacts with the dynein-dynactin complex; this interaction is inhibited in a PLK1-dependent manner. Part of a spindle orientation complex at least composed of GNAI1, GPSM2 and NUMA1. Interacts with LLGL2. Interacts (via TPR repeat region) with INSC/inscuteable. Interacts (via TPR repeat region) with NUMA1 (via C-terminus); this interaction is direct, inhibited in a PLK1-dependent manner, prevents the binding of NUMA1 with SPAG5 and promotes spindle pole organization. INSC and NUMA1 compete for the same binding site, but INSC has higher affinity and can displace NUMA1 (in vitro). Interacts with GNAI2. Interacts (via GoLoco domains) with the GDP-bound form of GNAI1 and GNAI3; has much lower affinity for the GTP-bound form. Interaction with GDP-bound GNAI3 strongly enhances the affinity for NUMA1. Interacts (via TPR repeat region) with FRMPD1. INSC and FRMPD1 compete for the same binding site, but INSC has higher affinity and can displace FRMPD1 (in vitro). Interacts (via TPR repeat region) with FRMPD4. Identified in a complex with INSC and F2RL2/Par3. Interacts with TASOR. In terms of tissue distribution, ubiquitously expressed.

It is found in the cytoplasm. The protein localises to the cell cortex. It localises to the cytoskeleton. The protein resides in the spindle pole. Its subcellular location is the lateral cell membrane. In terms of biological role, plays an important role in mitotic spindle pole organization via its interaction with NUMA1. Required for cortical dynein-dynactin complex recruitment during metaphase. Plays a role in metaphase spindle orientation. Also plays an important role in asymmetric cell divisions. Has guanine nucleotide dissociation inhibitor (GDI) activity towards G(i) alpha proteins, such as GNAI1 and GNAI3, and thereby regulates their activity. The protein is G-protein-signaling modulator 2 (GPSM2) of Homo sapiens (Human).